Reading from the N-terminus, the 101-residue chain is Large ribosomal subunit protein uL23 (101 aa).

Belongs to the universal ribosomal protein uL23 family. Part of the 50S ribosomal subunit. Contacts protein L29, and trigger factor when it is bound to the ribosome.

Its function is as follows. One of the early assembly proteins it binds 23S rRNA. One of the proteins that surrounds the polypeptide exit tunnel on the outside of the ribosome. Forms the main docking site for trigger factor binding to the ribosome. This chain is Large ribosomal subunit protein uL23, found in Wigglesworthia glossinidia brevipalpis.